A 653-amino-acid polypeptide reads, in one-letter code: Probable syringafactin export ATP-binding/permease protein SyfD (653 aa).

The 239-residue stretch at 6–244 folds into the ABC transporter domain; that stretch reads LELNGVTRRF…NEKTTERLPT (239 aa). 42–49 is a binding site for ATP; that stretch reads GASGSGKS. The next 5 helical transmembrane spans lie at 252–272, 278–298, 526–546, 583–603, and 616–636; these read LMAN…ALIS, LLTM…VAIG, LALL…IGVM, MVCL…GYVF, and LGSI…FGFV.

The protein belongs to the ABC transporter superfamily. Macrolide exporter (TC 3.A.1.122) family. Probably part of a tripartite efflux system, which is composed of an inner membrane transporter, a periplasmic membrane fusion protein, and an outer membrane component.

The protein localises to the cell inner membrane. Functionally, probably involved in the export of syringafactins. The chain is Probable syringafactin export ATP-binding/permease protein SyfD from Pseudomonas syringae pv. syringae (strain B728a).